The following is a 325-amino-acid chain: Delta(1)-pyrroline-2-carboxylate reductase (325 aa).

The protein belongs to the ornithine cyclodeaminase/mu-crystallin family.

It catalyses the reaction L-proline + NAD(+) = 1-pyrroline-2-carboxylate + NADH + H(+). It carries out the reaction L-proline + NADP(+) = 1-pyrroline-2-carboxylate + NADPH + H(+). Its function is as follows. Catalyzes the reduction of Delta(1)-pyrroline-2-carboxylate (Pyr2C) to L-proline, using preferentially NADPH over NADH as the electron donor. Is likely involved in a degradation pathway that converts trans-3-hydroxy-L-proline (t3LHyp) to L-proline. This chain is Delta(1)-pyrroline-2-carboxylate reductase, found in Bacillus cereus (strain ATCC 10987 / NRS 248).